The sequence spans 173 residues: MPRSNRNDNFIDKSFTVMADLIVKLLPINARSKEAYVYYRDGLSAQNDGDYAEALENYDEALKLETDPTDRGETLKNMAIIYMSNGEEERAIETYQKALDENPKQPSCLKNMGLIFEKWGRIAEESGQQDDADRWFDQAADVWTQAVRLNPGGYLDIENWLKSTGRSNVDVYF.

TPR repeat units follow at residues 35-68 (AYVYYRDGLSAQNDGDYAEALENYDEALKLETDP), 72-105 (GETLKNMAIIYMSNGEEERAIETYQKALDENPKQ), and 120-153 (GRIAEESGQQDDADRWFDQAADVWTQAVRLNPGG).

The protein belongs to the Ycf3 family.

The protein localises to the cellular thylakoid membrane. Its function is as follows. Essential for the assembly of the photosystem I (PSI) complex. May act as a chaperone-like factor to guide the assembly of the PSI subunits. The sequence is that of Photosystem I assembly protein Ycf3 from Synechococcus sp. (strain CC9902).